Reading from the N-terminus, the 127-residue chain is Glycine cleavage system H protein (127 aa).

The 83-residue stretch at 22-104 (KVRIGITHFA…YEKAWMIVVE (83 aa)) folds into the Lipoyl-binding domain. An N6-lipoyllysine modification is found at K63.

This sequence belongs to the GcvH family. As to quaternary structure, the glycine cleavage system is composed of four proteins: P, T, L and H. The cofactor is (R)-lipoate.

Its function is as follows. The glycine cleavage system catalyzes the degradation of glycine. The H protein shuttles the methylamine group of glycine from the P protein to the T protein. In terms of biological role, is also involved in protein lipoylation via its role as an octanoyl/lipoyl carrier protein intermediate. This is Glycine cleavage system H protein from Bacillus pumilus (strain SAFR-032).